A 218-amino-acid chain; its full sequence is Copper acquisition factor BIM1 (218 aa).

Positions 1–19 (MFALKSILVTSLITSTALA) are cleaved as a signal peptide. Positions 20 and 65 each coordinate Cu(2+). N-linked (GlcNAc...) asparagine glycans are attached at residues asparagine 87, asparagine 91, and asparagine 124. Residue aspartate 138 coordinates Cu(2+). Asparagine 158 and asparagine 170 each carry an N-linked (GlcNAc...) asparagine glycan. The tract at residues 160-194 (TCTNDASKASNATSTSSGSATATSAAATSSSSGTS) is disordered. Low complexity predominate over residues 165–194 (ASKASNATSTSSGSATATSAAATSSSSGTS). A lipid anchor (GPI-anchor amidated serine) is attached at serine 190. Positions 191–218 (SGTSGAIKEVVGFGALSLALGIAGLIIL) are cleaved as a propeptide — removed in mature form.

Belongs to the X325 family. As to quaternary structure, interacts with the CUF1-dependent copper transporter CTR1. Cu(2+) is required as a cofactor.

Its subcellular location is the cell membrane. Functionally, lytic polysaccharide monooxygenase-like protein that has diverged to biological functions other than polysaccharide degradation since it does not perform oxidative cleavage of polysaccharides. Cell surface-bound protein that functions in the copper-accumulation pathway shared by the CUF1-dependent copper transporter CTR1. Involved in maintaining cell wall integrity during copper deficiency. Binds Cu(2+) with an estimated 1:1 stoichiometry and might serve as an extracellular copper ligand. FRE4 and FRE7 metalloreductases probably function together with CTR1 and BIM1 to liberate the Cu(2+) bound to the BIM1 copper-binding site for subsequent import of Cu(+) into the cell by CTR1, via the reduction of BIM1-bound Cu(2+) to Cu(+) to reduce binding affinity for BIM1 but increase affinity for CTR1. Facilitates copper acquisition in the brain of mammalian hosts and acts as a copper-dependent virulence trait in fungal meningitis. While BIM1 plays a critical role in cryptococcal meningitis, at least in part through its role in copper acquisition, it could play additional roles during copper limitation or as a means to invade and colonize host tissues in the brain, by compromising host carbohydrate integrity via its lytic polysaccharide monooxygenase (LPMO) activity, which has still to be determined. The protein is Copper acquisition factor BIM1 of Cryptococcus neoformans var. grubii serotype A (strain H99 / ATCC 208821 / CBS 10515 / FGSC 9487) (Filobasidiella neoformans var. grubii).